The following is a 72-amino-acid chain: Translation initiation factor IF-1 (72 aa).

One can recognise an S1-like domain in the interval 1–72 (MARDDVIEVD…DRGRITFRYK (72 aa)).

The protein belongs to the IF-1 family. As to quaternary structure, component of the 30S ribosomal translation pre-initiation complex which assembles on the 30S ribosome in the order IF-2 and IF-3, IF-1 and N-formylmethionyl-tRNA(fMet); mRNA recruitment can occur at any time during PIC assembly.

It localises to the cytoplasm. In terms of biological role, one of the essential components for the initiation of protein synthesis. Stabilizes the binding of IF-2 and IF-3 on the 30S subunit to which N-formylmethionyl-tRNA(fMet) subsequently binds. Helps modulate mRNA selection, yielding the 30S pre-initiation complex (PIC). Upon addition of the 50S ribosomal subunit IF-1, IF-2 and IF-3 are released leaving the mature 70S translation initiation complex. The polypeptide is Translation initiation factor IF-1 (Helicobacter acinonychis (strain Sheeba)).